Consider the following 382-residue polypeptide: tRNA(Met) cytidine acetate ligase (382 aa).

ATP-binding positions include 9–22 (VTEY…HAYQ), glycine 103, asparagine 152, and arginine 177.

This sequence belongs to the TmcAL family.

It is found in the cytoplasm. The enzyme catalyses cytidine(34) in elongator tRNA(Met) + acetate + ATP = N(4)-acetylcytidine(34) in elongator tRNA(Met) + AMP + diphosphate. In terms of biological role, catalyzes the formation of N(4)-acetylcytidine (ac(4)C) at the wobble position of elongator tRNA(Met), using acetate and ATP as substrates. First activates an acetate ion to form acetyladenylate (Ac-AMP) and then transfers the acetyl group to tRNA to form ac(4)C34. The polypeptide is tRNA(Met) cytidine acetate ligase (Levilactobacillus brevis (strain ATCC 367 / BCRC 12310 / CIP 105137 / JCM 1170 / LMG 11437 / NCIMB 947 / NCTC 947) (Lactobacillus brevis)).